The chain runs to 362 residues: MWLLKKLIQRDIDLSPLRFQTCRLLLGNVWNRELTIIQRRILRRLRNRKRSIKKRKIYSKKYLTSYIQLQTTRKLSLFYGDLPITEMHRGTKRTSYIPFLLNLETRFDVILLRLHFLETIPQARQLISHRRVCVNKGMVSITHFKLSHGDIISFQENNAIIRGEEIRRSFYKEILVEKIIGKLLHQPLRMWRRSKTEWFHLLKTKRGCRLLLKSRFLQQLRSSMQEEDLERTKKFGSEKVCLGSSFAEHKRMKRNLLKSLFLSKRRKDKNLNLPTRTISPIVYNSSLSLYSNSTYCFASPHKLTMKRRIKRIELPTHYLEVNYRTPKAVVFYGPNIGHIPHDIRLKDLNLLLWSRNGRGQNI.

One can recognise an S4 RNA-binding domain in the interval 105–179 (TRFDVILLRL…FYKEILVEKI (75 aa)).

The protein belongs to the universal ribosomal protein uS4 family. Component of the mitochondrial ribosome small subunit.

It is found in the mitochondrion. The protein is Small ribosomal subunit protein uS4m (RPS4) of Arabidopsis thaliana (Mouse-ear cress).